A 365-amino-acid chain; its full sequence is 3-dehydroquinate synthase (365 aa).

Residues 75 to 80 (DAESGK), 109 to 113 (GAATD), 133 to 134 (TT), Lys-146, and Lys-155 each bind NAD(+). Positions 188, 253, and 269 each coordinate Zn(2+).

Belongs to the sugar phosphate cyclases superfamily. Dehydroquinate synthase family. Requires NAD(+) as cofactor. Co(2+) serves as cofactor. It depends on Zn(2+) as a cofactor.

The protein localises to the cytoplasm. It carries out the reaction 7-phospho-2-dehydro-3-deoxy-D-arabino-heptonate = 3-dehydroquinate + phosphate. It functions in the pathway metabolic intermediate biosynthesis; chorismate biosynthesis; chorismate from D-erythrose 4-phosphate and phosphoenolpyruvate: step 2/7. Functionally, catalyzes the conversion of 3-deoxy-D-arabino-heptulosonate 7-phosphate (DAHP) to dehydroquinate (DHQ). This Corynebacterium efficiens (strain DSM 44549 / YS-314 / AJ 12310 / JCM 11189 / NBRC 100395) protein is 3-dehydroquinate synthase.